A 250-amino-acid polypeptide reads, in one-letter code: LexA repressor (250 aa).

Positions 1–21 (MTSQERGTRRGDTRGNVRDFP) are enriched in basic and acidic residues. Residues 1–33 (MTSQERGTRRGDTRGNVRDFPDSPADASGLTQR) form a disordered region. The H-T-H motif DNA-binding region spans 54 to 74 (VREIGEAVGLTSTSSVAHQLK). Active-site for autocatalytic cleavage activity residues include serine 174 and lysine 211.

The protein belongs to the peptidase S24 family. Homodimer.

It catalyses the reaction Hydrolysis of Ala-|-Gly bond in repressor LexA.. Its function is as follows. Represses a number of genes involved in the response to DNA damage (SOS response), including recA and lexA. In the presence of single-stranded DNA, RecA interacts with LexA causing an autocatalytic cleavage which disrupts the DNA-binding part of LexA, leading to derepression of the SOS regulon and eventually DNA repair. The sequence is that of LexA repressor from Parafrankia sp. (strain EAN1pec).